The following is a 434-amino-acid chain: 3-phosphoshikimate 1-carboxyvinyltransferase (434 aa).

The 3-phosphoshikimate site is built by Lys22, Ser23, and Arg27. Lys22 contributes to the phosphoenolpyruvate binding site. Positions 93 and 121 each coordinate phosphoenolpyruvate. The 3-phosphoshikimate site is built by Ser168, Ser169, Gln170, Ser199, Asp320, and Lys347. Gln170 contacts phosphoenolpyruvate. Asp320 (proton acceptor) is an active-site residue. Residues Arg351, Arg394, and Lys419 each coordinate phosphoenolpyruvate.

It belongs to the EPSP synthase family. In terms of assembly, monomer.

Its subcellular location is the cytoplasm. The catalysed reaction is 3-phosphoshikimate + phosphoenolpyruvate = 5-O-(1-carboxyvinyl)-3-phosphoshikimate + phosphate. It functions in the pathway metabolic intermediate biosynthesis; chorismate biosynthesis; chorismate from D-erythrose 4-phosphate and phosphoenolpyruvate: step 6/7. Functionally, catalyzes the transfer of the enolpyruvyl moiety of phosphoenolpyruvate (PEP) to the 5-hydroxyl of shikimate-3-phosphate (S3P) to produce enolpyruvyl shikimate-3-phosphate and inorganic phosphate. The sequence is that of 3-phosphoshikimate 1-carboxyvinyltransferase from Paraburkholderia phytofirmans (strain DSM 17436 / LMG 22146 / PsJN) (Burkholderia phytofirmans).